Reading from the N-terminus, the 82-residue chain is Small ribosomal subunit protein bS20 (82 aa).

Positions 1 to 11 are enriched in basic residues; sequence MANHKSALKRI. Residues 1–20 are disordered; it reads MANHKSALKRIRSNETKRLR.

This sequence belongs to the bacterial ribosomal protein bS20 family.

In terms of biological role, binds directly to 16S ribosomal RNA. This is Small ribosomal subunit protein bS20 from Christiangramia forsetii (strain DSM 17595 / CGMCC 1.15422 / KT0803) (Gramella forsetii).